The sequence spans 217 residues: Large ribosomal subunit protein uL1A (217 aa).

Position 2 is an N-acetylserine (Ser2). Lys47 carries the N6-methyllysine; by RKM5 modification. A phosphoserine mark is found at Ser79 and Ser86.

It belongs to the universal ribosomal protein uL1 family. As to quaternary structure, component of the large ribosomal subunit (LSU). Mature yeast ribosomes consist of a small (40S) and a large (60S) subunit. The 40S small subunit contains 1 molecule of ribosomal RNA (18S rRNA) and 33 different proteins (encoded by 57 genes). The large 60S subunit contains 3 rRNA molecules (25S, 5.8S and 5S rRNA) and 46 different proteins (encoded by 81 genes). uL1 forms part of the L1 stalk. Post-translationally, N-terminally acetylated by acetyltransferase NatA.

The protein resides in the cytoplasm. In terms of biological role, component of the ribosome, a large ribonucleoprotein complex responsible for the synthesis of proteins in the cell. The small ribosomal subunit (SSU) binds messenger RNAs (mRNAs) and translates the encoded message by selecting cognate aminoacyl-transfer RNA (tRNA) molecules. The large subunit (LSU) contains the ribosomal catalytic site termed the peptidyl transferase center (PTC), which catalyzes the formation of peptide bonds, thereby polymerizing the amino acids delivered by tRNAs into a polypeptide chain. The nascent polypeptides leave the ribosome through a tunnel in the LSU and interact with protein factors that function in enzymatic processing, targeting, and the membrane insertion of nascent chains at the exit of the ribosomal tunnel. uL1 forms part of the L1 stalk, a mobile element that plays a role in evacuating the exit-site tRNA. In Saccharomyces cerevisiae (strain ATCC 204508 / S288c) (Baker's yeast), this protein is Large ribosomal subunit protein uL1A.